A 171-amino-acid chain; its full sequence is UPF0398 protein MGAS10270_Spy1470 (171 aa).

Belongs to the UPF0398 family.

The chain is UPF0398 protein MGAS10270_Spy1470 from Streptococcus pyogenes serotype M2 (strain MGAS10270).